A 329-amino-acid chain; its full sequence is Phosphate acyltransferase (329 aa).

This sequence belongs to the PlsX family. Homodimer. Probably interacts with PlsY.

It localises to the cytoplasm. The enzyme catalyses a fatty acyl-[ACP] + phosphate = an acyl phosphate + holo-[ACP]. It functions in the pathway lipid metabolism; phospholipid metabolism. Catalyzes the reversible formation of acyl-phosphate (acyl-PO(4)) from acyl-[acyl-carrier-protein] (acyl-ACP). This enzyme utilizes acyl-ACP as fatty acyl donor, but not acyl-CoA. The chain is Phosphate acyltransferase from Exiguobacterium sp. (strain ATCC BAA-1283 / AT1b).